Reading from the N-terminus, the 1211-residue chain is Endoplasmic reticulum transmembrane helix translocase (1211 aa).

Residues 1–23 (MGSKALITSPDISSGQLYIKLPT) are Cytoplasmic-facing. The helical transmembrane segment at 24–44 (FFHLYVWPFALFVYPYIGYVY) threads the bilayer. At 45–54 (QNKLYSEEVR) the chain is on the lumenal side. A helical transmembrane segment spans residues 55–75 (YLTYIAVGTIHALFWLAGEWN). Residues 76–191 (TKVYCLMTCR…FDIPIPTFGT (116 aa)) are Cytoplasmic-facing. Residues 155–185 (TIGTLKKSTGLTNIQSEIFLYRYGKNCFDIP) form an A-domain; part 1 region. The helical transmembrane segment at 192 to 212 (LFKEHAVAPFFVFQIFCCVLW) threads the bilayer. Over 213–216 (CLDD) the chain is Lumenal. The helical transmembrane segment at 217–237 (YWYFSLFSMFMIIALECSVVW) threads the bilayer. Over 238–397 (QRQRTLTEFR…EKVTANNRES (160 aa)) the chain is Cytoplasmic. The tract at residues 250–388 (SIKPYEIQVY…LVRTMVFSSE (139 aa)) is A-domain; part 2. A helical transmembrane segment spans residues 398-418 (LYFILFLLVFAIAASGYVWHV). The Lumenal segment spans residues 419–1057 (GSKTERSRYK…KERPQAGIFN (639 aa)). The P-domain; part 1 stretch occupies residues 464–493 (YIYCTEPFRIPLSGHLDICCFDKTGTLTEE). Asp485 (4-aspartylphosphate intermediate) is an active-site residue. 2 residues coordinate Mg(2+): Asp485 and Thr487. Residues 485–487 (DKT), Phe587, Arg644, Asp710, and 824–828 (DGTND) each bind ATP. The N-domain stretch occupies residues 495-685 (MVVQGIAGVN…FAGFLIFTSP (191 aa)). The interval 688–845 (EDARQTVQML…HVGVALLNAS (158 aa)) is P-domain; part 2. Asp824 serves as a coordination point for Mg(2+). The segment at 846–955 (EEDMLEMQER…NASDDEAPKL (110 aa)) is arm-like. A P-domain; part 3 region spans residues 956–971 (KLGDASVAAPFTSKLA). The chain crosses the membrane as a helical span at residues 1058–1078 (TYIIGSVLGQFAIHIVTLIYI). Residues 1079–1100 (TRVVYLYEDPLEKVDLEETFKP) lie on the Cytoplasmic side of the membrane. A helical transmembrane segment spans residues 1101–1121 (SLLNTAIYLLQLIQQVSTFAI). At 1122 to 1136 (NYQGRPFREALSENK) the chain is on the lumenal side. A helical transmembrane segment spans residues 1137–1157 (GMYYGLLGIAFVAIAGVTEFS). The Cytoplasmic segment spans residues 1158-1174 (PELNAKLQLVKMAYNFQ). Residues 1175–1195 (IQLLATMVVDYAACWIIEELM) traverse the membrane as a helical segment. Over 1196–1211 (KKYFRDNKPKEIVLRN) the chain is Lumenal.

The protein belongs to the cation transport ATPase (P-type) (TC 3.A.3) family. Type V subfamily. Mg(2+) serves as cofactor.

The protein localises to the endoplasmic reticulum membrane. The enzyme catalyses [protein]-with a C-terminal TM segment(out) + ATP + H2O = [protein]-with a C-terminal TM segment(in) + ADP + phosphate + H(+). In terms of biological role, endoplasmic reticulum translocase required to remove mitochondrial transmembrane proteins mistargeted to the endoplasmic reticulum. Acts as a dislocase that mediates the ATP-dependent extraction of mislocalized mitochondrial transmembrane proteins from the endoplasmic reticulum membrane. Specifically binds mitochondrial tail-anchored transmembrane proteins: has an atypically large substrate-binding pocket that recognizes and binds moderately hydrophobic transmembranes with short hydrophilic lumenal domains. Involved in controlling nuclear calcium ion levels. Required for cytokinesis and stabilizing microtubules. Required for assembly of the forespore membrane. Involved in calcium transport to the endoplasmic reticulum. The sequence is that of Endoplasmic reticulum transmembrane helix translocase from Schizosaccharomyces pombe (strain 972 / ATCC 24843) (Fission yeast).